The chain runs to 205 residues: Cerebellin-3 (205 aa).

The signal sequence occupies residues M1–A32. The 139-residue stretch at A67 to L205 folds into the C1q domain. The interval V72–L205 is necessary for interaction with CBLN3, and homotrimerization. A glycan (N-linked (GlcNAc...) asparagine) is linked at N90.

In terms of assembly, heterohexamer; disulfide-linked heterotrimers. Interacts with CBLN1. May also form oligomers with CBLN2 and CBLN4.

It localises to the endoplasmic reticulum. The protein resides in the golgi apparatus. It is found in the cis-Golgi network. The protein localises to the secreted. Its subcellular location is the synapse. Its function is as follows. May be involved in synaptic functions in the CNS. The polypeptide is Cerebellin-3 (CBLN3) (Homo sapiens (Human)).